Consider the following 84-residue polypeptide: Double gene block protein 2 (84 aa).

At 1–4 (MPSA) the chain is on the lumenal side. The helical transmembrane segment at 5–25 (NLHPIVLTGVIGLMLLIRLRC) threads the bilayer. Topologically, residues 26-30 (TFTST) are cytoplasmic. A helical membrane pass occupies residues 31–51 (FSLPPLVTLNQIIALSFCGLL). Residues 52–84 (LNSISRAERACYYNYSVDSSKQQHISISTPNGK) are Lumenal-facing.

This sequence belongs to the carmovirus double gene block protein 2 family.

It localises to the host endoplasmic reticulum membrane. Cell-to-cell movement function. This Carnation mottle virus (isolate China/Shanghai) (CarMV) protein is Double gene block protein 2.